Reading from the N-terminus, the 573-residue chain is Formate--tetrahydrofolate ligase 3 (573 aa).

66–73 (TPLGEGKT) serves as a coordination point for ATP.

It belongs to the formate--tetrahydrofolate ligase family.

It carries out the reaction (6S)-5,6,7,8-tetrahydrofolate + formate + ATP = (6R)-10-formyltetrahydrofolate + ADP + phosphate. The protein operates within one-carbon metabolism; tetrahydrofolate interconversion. This is Formate--tetrahydrofolate ligase 3 from Rubrobacter xylanophilus (strain DSM 9941 / JCM 11954 / NBRC 16129 / PRD-1).